The sequence spans 399 residues: Chaperone protein DnaJ 1 (399 aa).

Positions 10-75 (DYYKVLGVPK…KKRKEYDEAR (66 aa)) constitute a J domain. A CR-type zinc finger spans residues 166 to 244 (GATVPLRMSS…CKGSGRAKSS (79 aa)). Residues Cys179, Cys182, Cys195, Cys198, Cys218, Cys221, Cys232, and Cys235 each contribute to the Zn(2+) site. CXXCXGXG motif repeat units follow at residues 179–186 (CKACSGTG), 195–202 (CPTCVGTG), 218–225 (CPDCKGRG), and 232–239 (CEVCKGSG).

It belongs to the DnaJ family. Homodimer. It depends on Zn(2+) as a cofactor.

It localises to the cytoplasm. Participates actively in the response to hyperosmotic and heat shock by preventing the aggregation of stress-denatured proteins and by disaggregating proteins, also in an autonomous, DnaK-independent fashion. Unfolded proteins bind initially to DnaJ; upon interaction with the DnaJ-bound protein, DnaK hydrolyzes its bound ATP, resulting in the formation of a stable complex. GrpE releases ADP from DnaK; ATP binding to DnaK triggers the release of the substrate protein, thus completing the reaction cycle. Several rounds of ATP-dependent interactions between DnaJ, DnaK and GrpE are required for fully efficient folding. Also involved, together with DnaK and GrpE, in the DNA replication of plasmids through activation of initiation proteins. In Streptomyces coelicolor (strain ATCC BAA-471 / A3(2) / M145), this protein is Chaperone protein DnaJ 1.